Here is a 158-residue protein sequence, read N- to C-terminus: Large ribosomal subunit protein bL19 (158 aa).

Residues 119-129 (SDRSRVMKDAA) show a composition bias toward basic and acidic residues. The tract at residues 119–158 (SDRSRVMKDAARAQQARDAAQGNSSSETQSSTAAVETQGE) is disordered. The segment covering 130 to 139 (RAQQARDAAQ) has biased composition (low complexity). Residues 140–158 (GNSSSETQSSTAAVETQGE) show a composition bias toward polar residues.

It belongs to the bacterial ribosomal protein bL19 family.

Its function is as follows. This protein is located at the 30S-50S ribosomal subunit interface and may play a role in the structure and function of the aminoacyl-tRNA binding site. The polypeptide is Large ribosomal subunit protein bL19 (Deinococcus geothermalis (strain DSM 11300 / CIP 105573 / AG-3a)).